The following is a 209-amino-acid chain: Orotate phosphoribosyltransferase (209 aa).

Residues Arg96, Lys100, His102, and 122 to 130 each bind 5-phospho-alpha-D-ribose 1-diphosphate; that span reads EDLISTGGS. Residue Ser126 participates in orotate binding.

The protein belongs to the purine/pyrimidine phosphoribosyltransferase family. PyrE subfamily. Homodimer. Mg(2+) is required as a cofactor.

It carries out the reaction orotidine 5'-phosphate + diphosphate = orotate + 5-phospho-alpha-D-ribose 1-diphosphate. Its pathway is pyrimidine metabolism; UMP biosynthesis via de novo pathway; UMP from orotate: step 1/2. Catalyzes the transfer of a ribosyl phosphate group from 5-phosphoribose 1-diphosphate to orotate, leading to the formation of orotidine monophosphate (OMP). This Streptococcus thermophilus (strain ATCC BAA-491 / LMD-9) protein is Orotate phosphoribosyltransferase.